Reading from the N-terminus, the 236-residue chain is Large ribosomal subunit protein uL1 (236 aa).

It belongs to the universal ribosomal protein uL1 family. Part of the 50S ribosomal subunit.

Its function is as follows. Binds directly to 23S rRNA. The L1 stalk is quite mobile in the ribosome, and is involved in E site tRNA release. Protein L1 is also a translational repressor protein, it controls the translation of the L11 operon by binding to its mRNA. This is Large ribosomal subunit protein uL1 from Corynebacterium efficiens (strain DSM 44549 / YS-314 / AJ 12310 / JCM 11189 / NBRC 100395).